The primary structure comprises 382 residues: Mannitol-1-phosphate 5-dehydrogenase (382 aa).

Ala-3–Gly-14 is an NAD(+) binding site. Residue Lys-269 is modified to N6-acetyllysine.

It belongs to the mannitol dehydrogenase family.

It catalyses the reaction D-mannitol 1-phosphate + NAD(+) = beta-D-fructose 6-phosphate + NADH + H(+). The chain is Mannitol-1-phosphate 5-dehydrogenase from Escherichia coli O139:H28 (strain E24377A / ETEC).